Here is a 181-residue protein sequence, read N- to C-terminus: Large ribosomal subunit protein uL5 (181 aa).

Belongs to the universal ribosomal protein uL5 family. Part of the 50S ribosomal subunit; part of the 5S rRNA/L5/L18/L25 subcomplex. Contacts the 5S rRNA and the P site tRNA. Forms a bridge to the 30S subunit in the 70S ribosome.

Its function is as follows. This is one of the proteins that bind and probably mediate the attachment of the 5S RNA into the large ribosomal subunit, where it forms part of the central protuberance. In the 70S ribosome it contacts protein S13 of the 30S subunit (bridge B1b), connecting the 2 subunits; this bridge is implicated in subunit movement. Contacts the P site tRNA; the 5S rRNA and some of its associated proteins might help stabilize positioning of ribosome-bound tRNAs. This is Large ribosomal subunit protein uL5 from Campylobacter lari (strain RM2100 / D67 / ATCC BAA-1060).